The primary structure comprises 213 residues: Na(+)-translocating NADH-quinone reductase subunit D (213 aa).

The next 7 helical transmembrane spans lie at 14–34 (ALWINNQPLVAILGICSALAV), 42–62 (LTMGLAVSFVTGFASFVVSLL), 77–97 (IIISLFVILIDQFLKAFFFNI), 101–121 (LSVFVGLIITNCIVMGRAESM), 131–151 (FLDGLGSGLGYGWVLVCISII), 154–174 (LFGFGTILGFHIIPKIFYASA), and 183–203 (LGLMVLAPSAFFLLGIMVWLV).

Belongs to the NqrDE/RnfAE family. As to quaternary structure, composed of six subunits; NqrA, NqrB, NqrC, NqrD, NqrE and NqrF.

It is found in the cell inner membrane. The enzyme catalyses a ubiquinone + n Na(+)(in) + NADH + H(+) = a ubiquinol + n Na(+)(out) + NAD(+). NQR complex catalyzes the reduction of ubiquinone-1 to ubiquinol by two successive reactions, coupled with the transport of Na(+) ions from the cytoplasm to the periplasm. NqrA to NqrE are probably involved in the second step, the conversion of ubisemiquinone to ubiquinol. This is Na(+)-translocating NADH-quinone reductase subunit D from Chlamydia muridarum (strain MoPn / Nigg).